The chain runs to 150 residues: UPF0178 protein PSEEN5341 (150 aa).

The protein belongs to the UPF0178 family.

This chain is UPF0178 protein PSEEN5341, found in Pseudomonas entomophila (strain L48).